The following is a 541-amino-acid chain: Synaptotagmin-1 (541 aa).

Over 1–11 the chain is Extracellular; it reads MGFFSTILGFC. The helical transmembrane segment at 12–32 threads the bilayer; it reads GFGVGISLGLVIGYVLFVYLL. The Cytoplasmic portion of the chain corresponds to 33 to 541; it reads PNDVKDPEIR…QIELEWRTAS (509 aa). Residues 67–249 form the SMP-LTD domain; that stretch reads DFDRVDWINR…WPKTLVVPIL (183 aa). The phospholipid binding stretch occupies residues 227 to 509; the sequence is QEQIKDQVAN…TLGYVDIPVV (283 aa). C2 domains follow at residues 240 to 362 and 401 to 521; these read WPKT…AFTL and GFEE…NQKF. Ca(2+) is bound by residues aspartate 276, aspartate 282, aspartate 332, and glutamate 334.

It belongs to the synaptotagmin family. Interacts with cabbage leaf curl virus (CaLCuV) BC1 protein and tobacco mosaic virus (TMV) MP protein. Interacts with ROSY1. Ca(2+) serves as cofactor. As to expression, expressed in roots, shoots, rosette and cauline leaves, inflorescences, and siliques. In roots, expressed in vascular bundle, epidermis, the differential zone of the tips of root hairs, and the quiescent center and columella of root tips.

It is found in the cell membrane. The protein localises to the endosome membrane. Functionally, plays an important role in maintaining plasma membrane integrity during freezing and osmotic stresses. May function in membrane resealing during calcium-dependent freezing tolerance. May regulate endocytosis and endosome recycling at the plasma membrane and cell-to-cell trafficking of cabbage leaf curl virus (CaLCuV) and tobacco mosaic virus (TMV) movement proteins via plasmodesmata. The protein is Synaptotagmin-1 (SYT1) of Arabidopsis thaliana (Mouse-ear cress).